The primary structure comprises 309 residues: Homoserine O-succinyltransferase (309 aa).

Residue C142 is the Acyl-thioester intermediate of the active site. The substrate site is built by K163 and S192. Catalysis depends on H235, which acts as the Proton acceptor. E237 is an active-site residue. Position 249 (R249) interacts with substrate.

This sequence belongs to the MetA family.

It localises to the cytoplasm. The catalysed reaction is L-homoserine + succinyl-CoA = O-succinyl-L-homoserine + CoA. It functions in the pathway amino-acid biosynthesis; L-methionine biosynthesis via de novo pathway; O-succinyl-L-homoserine from L-homoserine: step 1/1. Its function is as follows. Transfers a succinyl group from succinyl-CoA to L-homoserine, forming succinyl-L-homoserine. The chain is Homoserine O-succinyltransferase from Klebsiella pneumoniae (strain 342).